Consider the following 388-residue polypeptide: STE20-related kinase adapter protein strd-1 (388 aa).

Positions 52–335 (YDCVRYMGTC…ASDLKSSAWL (284 aa)) constitute a Protein kinase domain. ATP-binding positions include 58–66 (MGTCNGGQI) and Lys-82.

The protein belongs to the protein kinase superfamily. STE Ser/Thr protein kinase family. STE20 subfamily. Interacts with sad-1. Interacts with par-4. Expressed in nervous system, pharynx and excretory canal. Expressed in germline.

It localises to the perikaryon. It is found in the nucleus. The protein resides in the cell projection. Its subcellular location is the dendrite. The protein localises to the axon. It localises to the synapse. It is found in the cytoplasm. The protein resides in the cell cortex. Pseudokinase which may act as an adapter for kinases sad-1 and par-4 and thereby is involved in several developmental processes. Regulates cell-autonomously both neuronal polarity and synaptic organization when bound to sad-1. Required for sad-1 localization to synapses. Required to establish germline stem cell (GSC) quiescence during dauer development, to promote cell shedding during embryogenesis and to control asymmetric cell division of the Q.p neuroblast lineage, probably when bound to par-4. May be involved in maintaining the integrity of the early embryonic cortex when bound to par-4. This Caenorhabditis elegans protein is STE20-related kinase adapter protein strd-1.